The sequence spans 488 residues: C2H2-type transcription factor MSN2 (488 aa).

2 consecutive C2H2-type zinc fingers follow at residues 376 to 399 and 405 to 427; these read FVCD…RSLH and FECN…ARTH.

Its subcellular location is the nucleus. It is found in the cytoplasm. Transcription factor that acts as a key downstream transcription factor in the HOG1-MAPK pathway. Plays crucial roles in the regulation of conidiation, virulence and multi-stress responses. Acts as a negative regulator of proteases, lipases, as well as of the red-pigmented oosporein production, and contributes to virulence and growth in response to external pH. Contributes to the ability to infect Rhipicephalus microplus (Acari, Ixodidae) via the cuticle-penetration requiring route involving proteolytic activity at the host cuticle. Does not seem to be involved in subsequent growth and proliferation once the tick cuticle has been breached. The chain is C2H2-type transcription factor MSN2 from Beauveria bassiana (strain ARSEF 2860) (White muscardine disease fungus).